Consider the following 274-residue polypeptide: MPCRREEEEEAGDEAEGEEDDDSFLLLQQSVTLGGSTDVDQLIVQIGETLQLDAAHDRPASPCAAPGPPPPQVLAALPADKTGTPARRLLRPTGSAETGNPAPPGAVRCVLGERGRVRGRSAPYCVAEISPGASALPQQPGLDGPPGTGKLSTPQPLSGPCRRGWLRNAAASRRLQQRRGSQPETRTGDDDDPHRLLQQLVLSGNLIKEAVRRLHSRQLQLHAKLPAHPFLGPLSAPVHEPPSPGSPRAACSDPGAFMGRAQLRTGDDLLVPGS.

Disordered regions lie at residues 1–24 (MPCRREEEEEAGDEAEGEEDDDSF), 55–107 (AHDR…PGAV), 132–194 (GASA…DDPH), and 232–274 (GPLS…VPGS). The span at 7–23 (EEEEAGDEAEGEEDDDS) shows a compositional bias: acidic residues. Residues 191 to 214 (DDPHRLLQQLVLSGNLIKEAVRRL) form an involved in GSK-3 binding region. Phosphoserine occurs at positions 243 and 246.

This sequence belongs to the GSK-3-binding protein family. As to quaternary structure, binds DVL1. Binds GSK-3 and prevent GSK-3-dependent phosphorylation. In terms of processing, phosphorylated. In terms of tissue distribution, highly expressed in testis. Lower level of expression in spleen, thymus and brain.

It localises to the cytoplasm. Functionally, positively regulates the Wnt signaling pathway by stabilizing beta-catenin through the association with GSK-3. May play a role in tumor progression and collaborate with PIM1 and MYC in lymphomagenesis. This Mus musculus (Mouse) protein is Proto-oncogene FRAT1 (Frat1).